We begin with the raw amino-acid sequence, 177 residues long: Large ribosomal subunit protein uL5 (177 aa).

Belongs to the universal ribosomal protein uL5 family. Part of the 50S ribosomal subunit; part of the 5S rRNA/L5/L18/L25 subcomplex. Contacts the 5S rRNA and the P site tRNA. Forms a bridge to the 30S subunit in the 70S ribosome.

This is one of the proteins that bind and probably mediate the attachment of the 5S RNA into the large ribosomal subunit, where it forms part of the central protuberance. In the 70S ribosome it contacts protein S13 of the 30S subunit (bridge B1b), connecting the 2 subunits; this bridge is implicated in subunit movement. Contacts the P site tRNA; the 5S rRNA and some of its associated proteins might help stabilize positioning of ribosome-bound tRNAs. The polypeptide is Large ribosomal subunit protein uL5 (Wolbachia sp. subsp. Brugia malayi (strain TRS)).